A 91-amino-acid polypeptide reads, in one-letter code: Small ribosomal subunit protein uS19 (91 aa).

It belongs to the universal ribosomal protein uS19 family.

Protein S19 forms a complex with S13 that binds strongly to the 16S ribosomal RNA. The sequence is that of Small ribosomal subunit protein uS19 from Synechococcus sp. (strain RCC307).